We begin with the raw amino-acid sequence, 180 residues long: Fetal and adult testis-expressed transcript protein homolog (180 aa).

Residues 77-108 (GPQLRGVGVVGEQGDGGAQPQENPGGSQGMRS) form a disordered region. The segment covering 84 to 93 (GVVGEQGDGG) has biased composition (gly residues). Over residues 96–107 (PQENPGGSQGMR) the composition is skewed to polar residues. A helical membrane pass occupies residues 160 to 178 (VLLFTMLLSSCITNLWLWM).

As to quaternary structure, interacts with BIK and RNF183. Interacts with IMMT/MIC60and EMD.

It localises to the mitochondrion. Its subcellular location is the mitochondrion outer membrane. The protein localises to the endoplasmic reticulum membrane. Its function is as follows. Involved in the regulation of endoplasmic reticulum (ER)-mitochondria coupling. Negatively regulates the ER-mitochondria distance and Ca(2+) transfer from ER to mitochondria possibly implicating it in the regulation of apoptosis. May collaborate with RNF183 to restrain BIK protein levels thus regulating apoptotic signaling. The sequence is that of Fetal and adult testis-expressed transcript protein homolog (FATE1) from Bos taurus (Bovine).